The chain runs to 365 residues: Cytochrome P450 71A3 (365 aa).

It belongs to the cytochrome P450 family. Requires heme as cofactor.

In terms of biological role, may have a role in maturation, such as during flavor formation or other metabolite production specific to aging tissues. The chain is Cytochrome P450 71A3 (CYP71A3) from Solanum melongena (Eggplant).